Here is a 164-residue protein sequence, read N- to C-terminus: Protein DOWNSTREAM OF FLC (164 aa).

Positions 1-23 are cleaved as a signal peptide; that stretch reads MAKSFVPLIAVLCVLVLPLAAMA. Cystine bridges form between C36–C107, C39–C148, and C60–C95.

It belongs to the Ole e I family.

Its subcellular location is the secreted. In terms of biological role, part of a three-gene cluster containing FLC, UFC and DFC, which is coordinately regulated in response to vernalization. Not regulated by FLX. The polypeptide is Protein DOWNSTREAM OF FLC (DFC) (Arabidopsis thaliana (Mouse-ear cress)).